The chain runs to 633 residues: Probable potassium transport system protein Kup 2 (633 aa).

A run of 11 helical transmembrane segments spans residues 59–79 (ISAILWALMVVVSLKYVILIM), 110–130 (ILLVGLFGAALFYGDAVLTPA), 145–165 (TALQPYVLPASVGVLIALFLF), 173–193 (IGALFGPVTIVWFLALAAAGI), 219–239 (GFASFAVLGAVLLAFTGAEAL), 256–276 (FGLVFPALALNYLGQGALIIV), 287–307 (LLYPSWALYPMVALATAATVI), 345–365 (IYIPTLNGMLLVAVLVAVLGF), 374–394 (AYGVAVTGTMLVTTLLTFFVI), 402–422 (LLLSLVATGFFIAVDMAFVSS), and 429–449 (EGGWFPLVVGAGIFVVMLTWV).

This sequence belongs to the HAK/KUP transporter (TC 2.A.72) family.

Its subcellular location is the cell inner membrane. It catalyses the reaction K(+)(in) + H(+)(in) = K(+)(out) + H(+)(out). In terms of biological role, transport of potassium into the cell. Likely operates as a K(+):H(+) symporter. This is Probable potassium transport system protein Kup 2 from Cupriavidus necator (strain ATCC 17699 / DSM 428 / KCTC 22496 / NCIMB 10442 / H16 / Stanier 337) (Ralstonia eutropha).